The sequence spans 109 residues: Large ribosomal subunit protein P1A (109 aa).

A compositionally biased stretch (low complexity) spans 69 to 84 (APVAGGAAAPAAADGE). Residues 69-109 (APVAGGAAAPAAADGEAPAEEKEEAKEEEESDEDMGFGLFD) are disordered. The span at 94–103 (KEEEESDEDM) shows a compositional bias: acidic residues.

Belongs to the eukaryotic ribosomal protein P1/P2 family. In terms of assembly, component of the large ribosomal subunit (LSU). Mature yeast ribosomes consist of a small (40S) and a large (60S) subunit. The 40S small subunit contains 1 molecule of ribosomal RNA (18S rRNA) and at least 33 different proteins. The large 60S subunit contains 3 rRNA molecules (25S, 5.8S and 5S rRNA) and at least 46 different proteins. The acidic ribosomal P-proteins form the stalk structure of the 60S subunit. They are organized as a pentameric complex in which uL10/P0 interacts with 2 heterodimers of P1 and P2 proteins.

Its subcellular location is the cytoplasm. In terms of biological role, component of the ribosome, a large ribonucleoprotein complex responsible for the synthesis of proteins in the cell. The small ribosomal subunit (SSU) binds messenger RNAs (mRNAs) and translates the encoded message by selecting cognate aminoacyl-transfer RNA (tRNA) molecules. The large subunit (LSU) contains the ribosomal catalytic site termed the peptidyl transferase center (PTC), which catalyzes the formation of peptide bonds, thereby polymerizing the amino acids delivered by tRNAs into a polypeptide chain. The nascent polypeptides leave the ribosome through a tunnel in the LSU and interact with protein factors that function in enzymatic processing, targeting, and the membrane insertion of nascent chains at the exit of the ribosomal tunnel. This chain is Large ribosomal subunit protein P1A (rpp101), found in Schizosaccharomyces pombe (strain 972 / ATCC 24843) (Fission yeast).